Reading from the N-terminus, the 226-residue chain is MKLVLKISGKFFDEENIENFISLRNTIKNIVNEGHRLAIVSGGGSTARKYIKIGRELGVNEAHLDLLGIWASRLNAYLLTFILSDLSYMKVPENLEEFIEKWESEKVVITGGFQPGQSTATVAALVSEAIAADYLILATNVDGVYDKDPRYNKDAKLLSKLNTETLKKILETSQSVKAGTYELLDPLAIKIIERSKIKVIVMNYKRLNKILDIIHGKDIGSIIEPM.

Residue 6 to 10 (KISGK) coordinates ATP. Gly43 is a UMP binding site. Residues Gly44 and Arg48 each coordinate ATP. Residues Asp65 and 113 to 119 (FQPGQST) each bind UMP. Positions 139, 140, 145, and 148 each coordinate ATP.

Belongs to the UMP kinase family. In terms of assembly, homohexamer.

The protein resides in the cytoplasm. It carries out the reaction UMP + ATP = UDP + ADP. The protein operates within pyrimidine metabolism; CTP biosynthesis via de novo pathway; UDP from UMP (UMPK route): step 1/1. Its activity is regulated as follows. Inhibited by UTP. Functionally, catalyzes the reversible phosphorylation of UMP to UDP. The polypeptide is Uridylate kinase (Sulfurisphaera tokodaii (strain DSM 16993 / JCM 10545 / NBRC 100140 / 7) (Sulfolobus tokodaii)).